Consider the following 255-residue polypeptide: uncharacterized protein (255 aa).

The first 23 residues, 1-23 (MKRLNKLVLGIIFLFLVISITAG), serve as a signal peptide directing secretion. Cysteine 24 is lipidated: N-palmitoyl cysteine. The S-diacylglycerol cysteine moiety is linked to residue cysteine 24.

The protein belongs to the staphylococcal tandem lipoprotein family.

The protein resides in the cell membrane. This is an uncharacterized protein from Staphylococcus aureus (strain USA300).